The chain runs to 294 residues: Cytidine deaminase (294 aa).

CMP/dCMP-type deaminase domains follow at residues 48-168 and 186-294; these read DEDA…FGPK and LTGD…VLLG. Position 89–91 (89–91) interacts with substrate; it reads NME. H102 lines the Zn(2+) pocket. E104 acts as the Proton donor in catalysis. Zn(2+)-binding residues include C129 and C132.

Belongs to the cytidine and deoxycytidylate deaminase family. Homodimer. Zn(2+) serves as cofactor.

The enzyme catalyses cytidine + H2O + H(+) = uridine + NH4(+). It carries out the reaction 2'-deoxycytidine + H2O + H(+) = 2'-deoxyuridine + NH4(+). In terms of biological role, this enzyme scavenges exogenous and endogenous cytidine and 2'-deoxycytidine for UMP synthesis. The polypeptide is Cytidine deaminase (Salmonella enteritidis PT4 (strain P125109)).